The primary structure comprises 320 residues: Ribosomal protein L11 methyltransferase (320 aa).

S-adenosyl-L-methionine is bound by residues T165, G186, D208, and N251.

This sequence belongs to the methyltransferase superfamily. PrmA family.

It is found in the cytoplasm. It carries out the reaction L-lysyl-[protein] + 3 S-adenosyl-L-methionine = N(6),N(6),N(6)-trimethyl-L-lysyl-[protein] + 3 S-adenosyl-L-homocysteine + 3 H(+). Methylates ribosomal protein L11. This is Ribosomal protein L11 methyltransferase from Limosilactobacillus fermentum (strain NBRC 3956 / LMG 18251) (Lactobacillus fermentum).